The sequence spans 384 residues: MSAWVLPDHIADVLPSEARHIEELRRGLIDTARGYGYELVMPPMLEHLESLLSGTGEALDLQTFKLVDQLSGRSIGLRADMTQQVARIDAHLLNRSGVTRLCYCGPVLHTRPDRPRATREPLQFGAEIYGHSGMEADLESVLLALDCLHLAGVEGVSVDLSDARVVRTLLEPIAADSATVRRIYAALAAKDASELSQASAGLPSGTRRALSAVLELYGDASVLDEARTALSDVAGVEEVLANLKSIAAHLEGRTVSFDLADLRGYSYYSGARFTIYARNATDAVVRGGRYDEVGAAFGRTRPAAGFSLDIKQLVGIVPPRTLKAAIRAPWAATPDAHRFIAQLRSAGETVVCVLPGHESQVQEFQCDRELVLEQGQWMVRPLPY.

This sequence belongs to the class-II aminoacyl-tRNA synthetase family. HisZ subfamily. Heteromultimer composed of HisG and HisZ subunits.

The protein localises to the cytoplasm. It functions in the pathway amino-acid biosynthesis; L-histidine biosynthesis; L-histidine from 5-phospho-alpha-D-ribose 1-diphosphate: step 1/9. Functionally, required for the first step of histidine biosynthesis. May allow the feedback regulation of ATP phosphoribosyltransferase activity by histidine. This chain is ATP phosphoribosyltransferase regulatory subunit, found in Paracidovorax citrulli (strain AAC00-1) (Acidovorax citrulli).